We begin with the raw amino-acid sequence, 395 residues long: Acetate kinase 2 (395 aa).

Asparagine 8 contributes to the Mg(2+) binding site. Residue lysine 15 participates in ATP binding. Arginine 89 is a binding site for substrate. The Proton donor/acceptor role is filled by aspartate 146. Residues 206 to 210, 283 to 285, and 331 to 335 each bind ATP; these read HIGNG, DMR, and GVGEN. Residue glutamate 383 coordinates Mg(2+).

The protein belongs to the acetokinase family. Homodimer. It depends on Mg(2+) as a cofactor. The cofactor is Mn(2+).

The protein resides in the cytoplasm. It carries out the reaction acetate + ATP = acetyl phosphate + ADP. It participates in metabolic intermediate biosynthesis; acetyl-CoA biosynthesis; acetyl-CoA from acetate: step 1/2. In terms of biological role, catalyzes the formation of acetyl phosphate from acetate and ATP. Can also catalyze the reverse reaction. This Lactococcus lactis subsp. lactis (strain IL1403) (Streptococcus lactis) protein is Acetate kinase 2.